The sequence spans 329 residues: Alternative oxidase, mitochondrial (329 aa).

Residues 115-135 (VISRCLFLETVAGVPGMVGGM) form a helical membrane-spanning segment. Fe cation contacts are provided by glutamate 123, glutamate 162, and histidine 165. The chain crosses the membrane as a helical span at residues 181 to 201 (VSIIITQAIMYLFLLVAYVIS). Positions 213, 266, and 269 each coordinate Fe cation. The tract at residues 300–329 (EMYSNQPSGKTRTDFGSEGAKTASNVNKHV) is disordered.

The protein belongs to the alternative oxidase family. Homodimer; disulfide-linked. Fe cation serves as cofactor.

It is found in the mitochondrion inner membrane. In terms of biological role, catalyzes cyanide-resistant oxygen consumption. May increase respiration when the cytochrome respiratory pathway is restricted, or in response to low temperatures. The sequence is that of Alternative oxidase, mitochondrial (AOX) from Trypanosoma brucei brucei.